The sequence spans 148 residues: Puroindoline-A (148 aa).

The first 19 residues, M1 to A19, serve as a signal peptide directing secretion. Residues Q20–Y28 constitute a propeptide that is removed on maturation. Residues Y147–W148 constitute a propeptide, removed in mature form.

In terms of processing, five disulfide bonds are present. Endosperm and aleurone layer of developing kernels. In the aleurone layer, mainly localized to starch granules and the surface of the plasma membrane, forming a uniform layer, also abundant in the intercellular space. In the endosperm, mainly localized to starch granules and the plasma membrane, but less abundant in the intercellular space. Not found in roots or coleoptiles.

The protein localises to the membrane. It is found in the secreted. It localises to the extracellular space. Its function is as follows. Acts as a membranotoxin, probably through its antibacterial and antifungal activities, contributing to the defense mechanism of the plant against predators. Forms monovalent cation-selective ion channels in membranes. Has antibacterial activity against the Gram-positive bacteria S.aureus and C.michiganensis, and the Gram-negative bacteria E.coli, P.syringae pv phaseoli, A.tumefaciens and E.carotovora subsp carotovora. Acts synergistically with PINB against bacteria. Contributes to grain texture and hardness. This Triticum aestivum (Wheat) protein is Puroindoline-A (PINA).